Reading from the N-terminus, the 226-residue chain is Leucyl/phenylalanyl-tRNA--protein transferase (226 aa).

It belongs to the L/F-transferase family.

The protein resides in the cytoplasm. It catalyses the reaction N-terminal L-lysyl-[protein] + L-leucyl-tRNA(Leu) = N-terminal L-leucyl-L-lysyl-[protein] + tRNA(Leu) + H(+). It carries out the reaction N-terminal L-arginyl-[protein] + L-leucyl-tRNA(Leu) = N-terminal L-leucyl-L-arginyl-[protein] + tRNA(Leu) + H(+). The catalysed reaction is L-phenylalanyl-tRNA(Phe) + an N-terminal L-alpha-aminoacyl-[protein] = an N-terminal L-phenylalanyl-L-alpha-aminoacyl-[protein] + tRNA(Phe). Functions in the N-end rule pathway of protein degradation where it conjugates Leu, Phe and, less efficiently, Met from aminoacyl-tRNAs to the N-termini of proteins containing an N-terminal arginine or lysine. This Pseudomonas fluorescens (strain SBW25) protein is Leucyl/phenylalanyl-tRNA--protein transferase.